The sequence spans 461 residues: Dihydrofolate reductase (461 aa).

The 215-residue stretch at 233–447 (DLTMIVAVSS…VEIEFELYGK (215 aa)) folds into the DHFR domain. NADP(+) contacts are provided by residues Ala-239 and 246–252 (GIGKKNS). 260-265 (EMAYFA) provides a ligand contact to substrate. 292–294 (RSC) provides a ligand contact to NADP(+). A substrate-binding site is contributed by Arg-308. Residues 314 to 316 (TRN) and 365 to 372 (GGSFLYGS) each bind NADP(+).

The protein belongs to the dihydrofolate reductase family.

The catalysed reaction is (6S)-5,6,7,8-tetrahydrofolate + NADP(+) = 7,8-dihydrofolate + NADPH + H(+). It participates in cofactor biosynthesis; tetrahydrofolate biosynthesis; 5,6,7,8-tetrahydrofolate from 7,8-dihydrofolate: step 1/1. Functionally, key enzyme in folate metabolism. Catalyzes an essential reaction for de novo glycine and purine synthesis, and for DNA precursor synthesis. In Schizosaccharomyces pombe (strain 972 / ATCC 24843) (Fission yeast), this protein is Dihydrofolate reductase (dfr1).